We begin with the raw amino-acid sequence, 126 residues long: uncharacterized protein (126 aa).

Transmembrane regions (helical) follow at residues 40 to 57 (IDKWILGALAFVFAVSFF) and 72 to 94 (ILIAIGIFATFEIAIILAVILGG).

It localises to the cell membrane. This is an uncharacterized protein from Pasteurella multocida (strain Pm70).